Reading from the N-terminus, the 103-residue chain is Small ribosomal subunit protein uS10 (103 aa).

It belongs to the universal ribosomal protein uS10 family. In terms of assembly, part of the 30S ribosomal subunit.

Its function is as follows. Involved in the binding of tRNA to the ribosomes. The chain is Small ribosomal subunit protein uS10 from Aromatoleum aromaticum (strain DSM 19018 / LMG 30748 / EbN1) (Azoarcus sp. (strain EbN1)).